Reading from the N-terminus, the 100-residue chain is Pancreatic polypeptide prohormone (100 aa).

A signal peptide spans 1–29 (MAVAYCCLSLFLVSTWVALLLQPLQGTWG). Tyr65 carries the tyrosine amide modification.

Belongs to the NPY family. In terms of processing, no icosapeptide-like peptide is cleaved from the C-terminal.

It localises to the secreted. In terms of biological role, hormone secreted by pancreatic cells that acts as a regulator of pancreatic and gastrointestinal functions probably by signaling through the G protein-coupled receptor NPY4R2. The sequence is that of Pancreatic polypeptide prohormone (Ppy) from Mus musculus (Mouse).